The chain runs to 34 residues: NU-buthitoxin-Ptr1a (34 aa).

Cystine bridges form between Cys-6–Cys-27, Cys-12–Cys-32, and Cys-16–Cys-34.

As to expression, expressed by the venom gland.

The protein localises to the secreted. Toxin that acts as an agonist on melanocortin receptors (MC1R, MC3R, MC5R, MC5R). After binding to MC1R, the peptide activates the hMC1R/Gs pathway, but after binding to MC4R, it is not able to activate or antagonize the MC4R/Gs pathway. Inhibits melanocyte stimulating hormone (MSH)-binding to human receptors (Ki=2.9 uM to MC1R, Ki=3.9 uM to MC3R, Ki=2.6 uM to MC4R, Ki=2.2 uM to MC5R). This toxin is structurally unrelated to the natural agonists. The sequence is that of NU-buthitoxin-Ptr1a from Parabuthus transvaalicus (Transvaal thick-tailed scorpion).